The sequence spans 106 residues: UPF0473 protein SSU98_0068 (106 aa).

The protein belongs to the UPF0473 family.

In Streptococcus suis (strain 98HAH33), this protein is UPF0473 protein SSU98_0068.